The chain runs to 99 residues: PqqA binding protein (99 aa).

It belongs to the PqqD family. Monomer. Interacts with PqqE.

It functions in the pathway cofactor biosynthesis; pyrroloquinoline quinone biosynthesis. In terms of biological role, functions as a PqqA binding protein and presents PqqA to PqqE, in the pyrroloquinoline quinone (PQQ) biosynthetic pathway. This Acinetobacter baylyi (strain ATCC 33305 / BD413 / ADP1) protein is PqqA binding protein.